A 211-amino-acid chain; its full sequence is Adenylate kinase (211 aa).

10-15 (GSGKGT) is an ATP binding site. Residues 30–59 (STGDMLRAEVSKKSPLGLKAEEYMKQGLLV) form an NMP region. AMP contacts are provided by residues Thr31, Arg36, 57-59 (LLV), 84-87 (GFPR), and Gln91. The interval 125–162 (GRRVCPKCGATYNIYYQKPKNDTLCDNDATPLIQRDDD) is LID. Residue Arg126 participates in ATP binding. Residues Cys129 and Cys132 each contribute to the Zn(2+) site. 135-136 (TY) provides a ligand contact to ATP. Zn(2+)-binding residues include Cys149 and Asp152. 2 residues coordinate AMP: Arg159 and Arg170. Gly198 contributes to the ATP binding site.

It belongs to the adenylate kinase family. In terms of assembly, monomer.

It is found in the cytoplasm. It carries out the reaction AMP + ATP = 2 ADP. It functions in the pathway purine metabolism; AMP biosynthesis via salvage pathway; AMP from ADP: step 1/1. Catalyzes the reversible transfer of the terminal phosphate group between ATP and AMP. Plays an important role in cellular energy homeostasis and in adenine nucleotide metabolism. The chain is Adenylate kinase from Hydrogenobaculum sp. (strain Y04AAS1).